Here is an 835-residue protein sequence, read N- to C-terminus: Envelope glycoprotein gp160 (835 aa).

The signal sequence occupies residues 1–25 (MKVTEMQKNWLICCLLIGLIKIIGS). Over 26 to 656 (ELWVTVYYGV…ITKWLWYIKI (631 aa)) the chain is Extracellular. A disulfide bond links C47 and C67. N-linked (GlcNAc...) asparagine; by host glycans are attached at residues N81, N131, N135, N144, N148, N175, N176, N180, N190, N227, N234, N255, N267, N278, N284, N290, N322, N330, and N342. Cystine bridges form between C112/C198, C119/C189, C124/C145, C211/C240, and C221/C232. A V1 region spans residues 124–144 (CSSWRSVNNSVNQTNHVQMQN). A V2 region spans residues 145–189 (CSFNVTTELRDKKKQVYSLFYMGDIIPLDTNNSSGNNSQYRLINC). The tract at residues 285–318 (CTRPGNKTRGQVQIGPGMTFYNIENIIGDTRQAY) is V3. A disulfide bridge connects residues C285 and C319. Residues 348–358 (NPGGDLEVTNL) form a CD4-binding loop region. Intrachain disulfides connect C362/C417 and C369/C390. Residues 369–390 (CNTSQLFTNQNGNTTGNITLQC) are V4. 4 N-linked (GlcNAc...) asparagine; by host glycosylation sites follow: N370, N381, N385, and N420. Residues 433-441 (TEKYTIYPT) are V5. The segment at 482–503 (AAFGLGALFLGFLGAAGSTMGA) is fusion peptide. Residues 545 to 563 (KQLQARVLAIERYLRDQQI) are immunosuppression. C569 and C575 form a disulfide bridge. N-linked (GlcNAc...) asparagine; by host glycosylation is found at N582, N588, N597, and N609. Residues 605–639 (EQVRNYSGVIFGLLEQAQEQQSINEKSLLELDQWS) are a coiled coil. Positions 634-655 (ELDQWSSLWNWFDITKWLWYIK) are MPER; binding to GalCer. A helical membrane pass occupies residues 657 to 677 (FIMVVAGIVGIRIISIIMSMV). At 678 to 835 (ARVRQGYSPL…IRQGLERALL (158 aa)) the chain is on the cytoplasmic side. The YXXL motif; contains endocytosis signal signature appears at 684–687 (YSPL). The Di-leucine internalization motif motif lies at 834-835 (LL).

It belongs to the HIV-1 env protein family. As to quaternary structure, the mature envelope protein (Env) consists of a homotrimer of non-covalently associated gp120-gp41 heterodimers. The resulting complex protrudes from the virus surface as a spike. There seems to be as few as 10 spikes on the average virion. Interacts with host CD4, CCR5 and CXCR4. Gp120 also interacts with the C-type lectins CD209/DC-SIGN and CLEC4M/DC-SIGNR (collectively referred to as DC-SIGN(R)). Gp120 and gp41 interact with GalCer. Gp120 interacts with host ITGA4/ITGB7 complex; on CD4+ T-cells, this interaction results in rapid activation of integrin ITGAL/LFA-1, which facilitates efficient cell-to-cell spreading of HIV-1. Gp120 interacts with cell-associated heparan sulfate; this interaction increases virus infectivity on permissive cells and may be involved in infection of CD4- cells. The mature envelope protein (Env) consists of a homotrimer of non-covalently associated gp120-gp41 heterodimers. The resulting complex protrudes from the virus surface as a spike. There seems to be as few as 10 spikes on the average virion. Highly glycosylated by host. The high number of glycan on the protein is reffered to as 'glycan shield' because it contributes to hide protein sequence from adaptive immune system. In terms of processing, palmitoylation of the transmembrane protein and of Env polyprotein (prior to its proteolytic cleavage) is essential for their association with host cell membrane lipid rafts. Palmitoylation is therefore required for envelope trafficking to classical lipid rafts, but not for viral replication. Post-translationally, specific enzymatic cleavages in vivo yield mature proteins. Envelope glycoproteins are synthesized as an inactive precursor that is heavily N-glycosylated and processed likely by host cell furin in the Golgi to yield the mature SU and TM proteins. The cleavage site between SU and TM requires the minimal sequence [KR]-X-[KR]-R. About 2 of the 9 disulfide bonds of gp41 are reduced by P4HB/PDI, following binding to CD4 receptor.

Its subcellular location is the virion membrane. The protein localises to the host cell membrane. It localises to the host endosome membrane. In terms of biological role, attaches the virus to the host lymphoid cell by binding to the primary receptor CD4. This interaction induces a structural rearrangement creating a high affinity binding site for a chemokine coreceptor like CXCR4 and/or CCR5. Acts as a ligand for CD209/DC-SIGN and CLEC4M/DC-SIGNR, which are respectively found on dendritic cells (DCs), and on endothelial cells of liver sinusoids and lymph node sinuses. These interactions allow capture of viral particles at mucosal surfaces by these cells and subsequent transmission to permissive cells. HIV subverts the migration properties of dendritic cells to gain access to CD4+ T-cells in lymph nodes. Virus transmission to permissive T-cells occurs either in trans (without DCs infection, through viral capture and transmission), or in cis (following DCs productive infection, through the usual CD4-gp120 interaction), thereby inducing a robust infection. In trans infection, bound virions remain infectious over days and it is proposed that they are not degraded, but protected in non-lysosomal acidic organelles within the DCs close to the cell membrane thus contributing to the viral infectious potential during DCs' migration from the periphery to the lymphoid tissues. On arrival at lymphoid tissues, intact virions recycle back to DCs' cell surface allowing virus transmission to CD4+ T-cells. Its function is as follows. Acts as a class I viral fusion protein. Under the current model, the protein has at least 3 conformational states: pre-fusion native state, pre-hairpin intermediate state, and post-fusion hairpin state. During fusion of viral and target intracellular membranes, the coiled coil regions (heptad repeats) assume a trimer-of-hairpins structure, positioning the fusion peptide in close proximity to the C-terminal region of the ectodomain. The formation of this structure appears to drive apposition and subsequent fusion of viral and target cell membranes. Complete fusion occurs in host cell endosomes and is dynamin-dependent, however some lipid transfer might occur at the plasma membrane. The virus undergoes clathrin-dependent internalization long before endosomal fusion, thus minimizing the surface exposure of conserved viral epitopes during fusion and reducing the efficacy of inhibitors targeting these epitopes. Membranes fusion leads to delivery of the nucleocapsid into the cytoplasm. Oligomerizes in the host endoplasmic reticulum into predominantly trimers. In a second time, gp160 transits in the host Golgi, where glycosylation is completed. The precursor is then proteolytically cleaved in the trans-Golgi and thereby activated by cellular furin or furin-like proteases to produce gp120 and gp41. The protein is Envelope glycoprotein gp160 of Pan troglodytes (Chimpanzee).